A 229-amino-acid chain; its full sequence is Prolactin (229 aa).

Positions 1 to 30 (MDNKGWSLKGSLLPLLLLVSDLLLCQGVTS) are cleaved as a signal peptide. Cys-34 and Cys-41 form a disulfide bridge. A phosphoserine mark is found at Ser-56, Ser-64, and Ser-120. Disulfide bonds link Cys-88–Cys-204 and Cys-221–Cys-229.

The protein belongs to the somatotropin/prolactin family. As to quaternary structure, interacts with PRLR.

Its subcellular location is the secreted. In terms of biological role, prolactin acts primarily on the mammary gland by promoting lactation. This is Prolactin (PRL) from Neovison vison (American mink).